We begin with the raw amino-acid sequence, 80 residues long: Putative membrane protein insertion efficiency factor (80 aa).

This sequence belongs to the UPF0161 family.

It localises to the cell membrane. Functionally, could be involved in insertion of integral membrane proteins into the membrane. The protein is Putative membrane protein insertion efficiency factor of Corynebacterium jeikeium (strain K411).